A 231-amino-acid chain; its full sequence is NADH-ubiquinone oxidoreductase chain 4 (231 aa).

7 consecutive transmembrane segments (helical) span residues 1 to 21, 34 to 54, 63 to 85, 89 to 111, 128 to 148, 169 to 189, and 211 to 231; these read PIAGSMVLAAVLLKLGGYGII, MFLPFIVLALWGAILANLTCL, IAYSSISHMGLVVAAIIIQTPWG, AMALMIAHGFTSSALFCLANTTY, ILPMTTTWWLLANLMNIATPP, TIILLGLSMLITASYSLHMFL, and LLMALHLVPLMMISMKPELII.

This sequence belongs to the complex I subunit 4 family.

It localises to the mitochondrion membrane. The catalysed reaction is a ubiquinone + NADH + 5 H(+)(in) = a ubiquinol + NAD(+) + 4 H(+)(out). Its function is as follows. Core subunit of the mitochondrial membrane respiratory chain NADH dehydrogenase (Complex I) that is believed to belong to the minimal assembly required for catalysis. Complex I functions in the transfer of electrons from NADH to the respiratory chain. The immediate electron acceptor for the enzyme is believed to be ubiquinone. The chain is NADH-ubiquinone oxidoreductase chain 4 (MT-ND4) from Cerrophidion godmani (Porthidium godmani).